We begin with the raw amino-acid sequence, 178 residues long: Nicotinamide-nucleotide adenylyltransferase (178 aa).

It belongs to the archaeal NMN adenylyltransferase family.

It is found in the cytoplasm. The enzyme catalyses beta-nicotinamide D-ribonucleotide + ATP + H(+) = diphosphate + NAD(+). Its pathway is cofactor biosynthesis; NAD(+) biosynthesis; NAD(+) from nicotinamide D-ribonucleotide: step 1/1. This chain is Nicotinamide-nucleotide adenylyltransferase, found in Pyrobaculum neutrophilum (strain DSM 2338 / JCM 9278 / NBRC 100436 / V24Sta) (Thermoproteus neutrophilus).